A 370-amino-acid chain; its full sequence is N-acetyldiaminopimelate deacetylase (370 aa).

D67 is a catalytic residue. Residue E126 is the Proton acceptor of the active site.

This sequence belongs to the peptidase M20A family. N-acetyldiaminopimelate deacetylase subfamily.

The catalysed reaction is N-acetyl-(2S,6S)-2,6-diaminopimelate + H2O = (2S,6S)-2,6-diaminopimelate + acetate. Its pathway is amino-acid biosynthesis; L-lysine biosynthesis via DAP pathway; LL-2,6-diaminopimelate from (S)-tetrahydrodipicolinate (acetylase route): step 3/3. In terms of biological role, catalyzes the conversion of N-acetyl-diaminopimelate to diaminopimelate and acetate. This Exiguobacterium sibiricum (strain DSM 17290 / CCUG 55495 / CIP 109462 / JCM 13490 / 255-15) protein is N-acetyldiaminopimelate deacetylase.